A 400-amino-acid polypeptide reads, in one-letter code: NADH dehydrogenase-like protein MT1860 (400 aa).

This sequence belongs to the NADH dehydrogenase family. FAD is required as a cofactor.

The polypeptide is NADH dehydrogenase-like protein MT1860 (Mycobacterium tuberculosis (strain CDC 1551 / Oshkosh)).